The primary structure comprises 124 residues: Ribonuclease pancreatic (124 aa).

Residues 1–13 (KESAAAKFERQHM) are compositionally biased toward basic and acidic residues. A disordered region spans residues 1–24 (KESAAAKFERQHMDSSTSSASSSN). Substrate-binding residues include lysine 7 and arginine 10. The active-site Proton acceptor is histidine 12. 4 disulfides stabilise this stretch: cysteine 26–cysteine 84, cysteine 40–cysteine 95, cysteine 58–cysteine 110, and cysteine 65–cysteine 72. Residues 41–45 (KPVNT), lysine 66, and arginine 85 each bind substrate. The active-site Proton donor is histidine 119.

Belongs to the pancreatic ribonuclease family. Monomer. Interacts with and forms tight 1:1 complexes with RNH1. Dimerization of two such complexes may occur. Interaction with RNH1 inhibits this protein. As to expression, pancreas.

It is found in the secreted. It catalyses the reaction an [RNA] containing cytidine + H2O = an [RNA]-3'-cytidine-3'-phosphate + a 5'-hydroxy-ribonucleotide-3'-[RNA].. The enzyme catalyses an [RNA] containing uridine + H2O = an [RNA]-3'-uridine-3'-phosphate + a 5'-hydroxy-ribonucleotide-3'-[RNA].. Functionally, endonuclease that catalyzes the cleavage of RNA on the 3' side of pyrimidine nucleotides. Acts on single-stranded and double-stranded RNA. This Connochaetes taurinus (Blue wildebeest) protein is Ribonuclease pancreatic (RNASE1).